The sequence spans 250 residues: Ribosomal RNA small subunit methyltransferase J (250 aa).

S-adenosyl-L-methionine contacts are provided by residues 96-97 (RD) and Asp-168.

The protein belongs to the methyltransferase superfamily. RsmJ family.

Its subcellular location is the cytoplasm. It catalyses the reaction guanosine(1516) in 16S rRNA + S-adenosyl-L-methionine = N(2)-methylguanosine(1516) in 16S rRNA + S-adenosyl-L-homocysteine + H(+). Functionally, specifically methylates the guanosine in position 1516 of 16S rRNA. The protein is Ribosomal RNA small subunit methyltransferase J of Neisseria gonorrhoeae (strain NCCP11945).